Here is a 1300-residue protein sequence, read N- to C-terminus: Nephrocystin-3 (1300 aa).

Residues K82–Q183 adopt a coiled-coil conformation. 9 TPR repeats span residues T443–L476, A916–A949, A958–A991, A1000–S1033, A1066–V1099, A1108–A1141, A1150–S1183, A1192–S1225, and G1234–E1267. The segment at T1268–S1288 is disordered. The span at G1278–S1288 shows a compositional bias: polar residues.

It is found in the cell projection. The protein localises to the cilium. Required for normal ciliary development and function. Inhibits disheveled-1-induced canonical Wnt-signaling activity and may also play a role in the control of non-canonical Wnt signaling that regulates planar cell polarity. Probably acts as a molecular switch between different Wnt signaling pathways. Required for proper convergent extension cell movements. The sequence is that of Nephrocystin-3 (nphp3) from Xenopus laevis (African clawed frog).